Here is a 118-residue protein sequence, read N- to C-terminus: Ribonuclease P protein component (118 aa).

The protein belongs to the RnpA family. As to quaternary structure, consists of a catalytic RNA component (M1 or rnpB) and a protein subunit.

The enzyme catalyses Endonucleolytic cleavage of RNA, removing 5'-extranucleotides from tRNA precursor.. Functionally, RNaseP catalyzes the removal of the 5'-leader sequence from pre-tRNA to produce the mature 5'-terminus. It can also cleave other RNA substrates such as 4.5S RNA. The protein component plays an auxiliary but essential role in vivo by binding to the 5'-leader sequence and broadening the substrate specificity of the ribozyme. This is Ribonuclease P protein component from Shewanella frigidimarina (strain NCIMB 400).